The chain runs to 397 residues: Acetate kinase (397 aa).

Asn8 serves as a coordination point for Mg(2+). Lys15 is an ATP binding site. Arg89 provides a ligand contact to substrate. The Proton donor/acceptor role is filled by Asp146. Residues 206–210, 281–283, and 329–333 each bind ATP; these read HLGNG, DLR, and GIGEN. Mg(2+) is bound at residue Glu382.

The protein belongs to the acetokinase family. Homodimer. Requires Mg(2+) as cofactor. The cofactor is Mn(2+).

It localises to the cytoplasm. It catalyses the reaction acetate + ATP = acetyl phosphate + ADP. It functions in the pathway metabolic intermediate biosynthesis; acetyl-CoA biosynthesis; acetyl-CoA from acetate: step 1/2. In terms of biological role, catalyzes the formation of acetyl phosphate from acetate and ATP. Can also catalyze the reverse reaction. This Bacillus cytotoxicus (strain DSM 22905 / CIP 110041 / 391-98 / NVH 391-98) protein is Acetate kinase.